A 316-amino-acid chain; its full sequence is Thymidylate synthase (316 aa).

DUMP contacts are provided by residues R23 and 178–179; that span reads RR. C198 (nucleophile) is an active-site residue. DUMP-binding positions include 218 to 221, N229, and 259 to 261; these read RSAD and HIY. D221 contributes to the (6R)-5,10-methylene-5,6,7,8-tetrahydrofolate binding site. Residue A315 coordinates (6R)-5,10-methylene-5,6,7,8-tetrahydrofolate.

Belongs to the thymidylate synthase family. Bacterial-type ThyA subfamily. In terms of assembly, homodimer.

The protein resides in the cytoplasm. It catalyses the reaction dUMP + (6R)-5,10-methylene-5,6,7,8-tetrahydrofolate = 7,8-dihydrofolate + dTMP. It participates in pyrimidine metabolism; dTTP biosynthesis. Its function is as follows. Catalyzes the reductive methylation of 2'-deoxyuridine-5'-monophosphate (dUMP) to 2'-deoxythymidine-5'-monophosphate (dTMP) while utilizing 5,10-methylenetetrahydrofolate (mTHF) as the methyl donor and reductant in the reaction, yielding dihydrofolate (DHF) as a by-product. This enzymatic reaction provides an intracellular de novo source of dTMP, an essential precursor for DNA biosynthesis. This Levilactobacillus brevis (strain ATCC 367 / BCRC 12310 / CIP 105137 / JCM 1170 / LMG 11437 / NCIMB 947 / NCTC 947) (Lactobacillus brevis) protein is Thymidylate synthase.